The sequence spans 297 residues: N-acetylmuramic acid 6-phosphate etherase (297 aa).

An SIS domain is found at 56–219; it reads AIEAFNKGGR…STISMIGIGK (164 aa). E84 serves as the catalytic Proton donor. The active site involves E115.

The protein belongs to the GCKR-like family. MurNAc-6-P etherase subfamily. As to quaternary structure, homodimer.

It catalyses the reaction N-acetyl-D-muramate 6-phosphate + H2O = N-acetyl-D-glucosamine 6-phosphate + (R)-lactate. The protein operates within amino-sugar metabolism; N-acetylmuramate degradation. Functionally, specifically catalyzes the cleavage of the D-lactyl ether substituent of MurNAc 6-phosphate, producing GlcNAc 6-phosphate and D-lactate. This chain is N-acetylmuramic acid 6-phosphate etherase, found in Lactococcus lactis subsp. lactis (strain IL1403) (Streptococcus lactis).